Here is a 105-residue protein sequence, read N- to C-terminus: DNA-directed RNA polymerase subunit omega (105 aa).

This sequence belongs to the RNA polymerase subunit omega family. In terms of assembly, the RNAP catalytic core consists of 2 alpha, 1 beta, 1 beta' and 1 omega subunit. When a sigma factor is associated with the core the holoenzyme is formed, which can initiate transcription.

The enzyme catalyses RNA(n) + a ribonucleoside 5'-triphosphate = RNA(n+1) + diphosphate. Its function is as follows. Promotes RNA polymerase assembly. Latches the N- and C-terminal regions of the beta' subunit thereby facilitating its interaction with the beta and alpha subunits. The protein is DNA-directed RNA polymerase subunit omega of Streptococcus pyogenes serotype M12 (strain MGAS2096).